The sequence spans 531 residues: DnaJ homolog subfamily C member 21 (531 aa).

Residues 3–69 (CHYEALGVRR…QERAWYDNHR (67 aa)) form the J domain. Disordered stretches follow at residues 279 to 311 (FGDG…AELY), 327 to 474 (KAMK…VPAE), and 502 to 531 (KATG…RKNR). Over residues 281–311 (DGSDENEMEEHELKDEEDGKDSDEAEDAELY) the composition is skewed to acidic residues. Phosphoserine occurs at positions 283 and 302. A C2H2-type 1 zinc finger spans residues 314 to 338 (LYCPACDKSFKTEKAMKNHEKSKKH). Residues 364–375 (NPLDDNSEEEME) show a composition bias toward acidic residues. S370 is modified (phosphoserine). The span at 381–392 (KLSKKQKKKKQK) shows a compositional bias: basic residues. Positions 393-403 (PAQNYDDNFNV) are enriched in polar residues. A compositionally biased stretch (basic and acidic residues) spans 442-453 (KPCDDPKSEAKS). Basic residues predominate over residues 455 to 464 (PKPKGKKTKD). The segment at 482 to 506 (ISCTTCHSEFPSRNKLFDHLKATGH) adopts a C2H2-type 2 zinc-finger fold. S511 carries the post-translational modification Phosphoserine. Over residues 511-522 (SSSSLNSATSSQ) the composition is skewed to low complexity.

As to quaternary structure, interacts with HSPA8, PA2G4 and ZNF622. As to expression, expressed in brain, placenta, kidney and pancreas.

It localises to the cytoplasm. Its subcellular location is the nucleus. The protein localises to the nucleolus. May act as a co-chaperone for HSP70. May play a role in ribosomal RNA (rRNA) biogenesis, possibly in the maturation of the 60S subunit. Binds the precursor 45S rRNA. The chain is DnaJ homolog subfamily C member 21 (DNAJC21) from Homo sapiens (Human).